The sequence spans 395 residues: Multidrug resistance protein MdtL (395 aa).

Residues 1-3 (MKR) lie on the Cytoplasmic side of the membrane. A helical membrane pass occupies residues 4 to 24 (FLLCSFALVLLYPAGIDMYLV). At 25 to 41 (GLPRIAADLNASEAQLH) the chain is on the periplasmic side. Residues 42-62 (IAFSVYLAGMATAMLFAGKIA) traverse the membrane as a helical segment. Residues 63–68 (DQSGRK) lie on the Cytoplasmic side of the membrane. A helical membrane pass occupies residues 69-89 (PVAIVGALVFMMASLLCSRAS). Residues 90–92 (EGS) are Periplasmic-facing. Residues 93–113 (LFLSGRFLQGVGAGGCYVVAF) traverse the membrane as a helical segment. The Cytoplasmic segment spans residues 114-130 (AILRDTLDEHRRAKVLS). The chain crosses the membrane as a helical span at residues 131–151 (LLNGITCIVPVLAPVVGHLIM). At 152–157 (LRFPWQ) the chain is on the periplasmic side. A helical membrane pass occupies residues 158-178 (SLFYTMSAMGIIVGLLSLFIL). The Cytoplasmic segment spans residues 179-216 (RETRPVRLAPRDLSRSSPAAESLINRFFVSRLAITTLS). A helical membrane pass occupies residues 217–237 (VSVILTFVNASPVLLMEVMGF). Residues 238–246 (SRGDYAITM) lie on the Periplasmic side of the membrane. The chain crosses the membrane as a helical span at residues 247 to 267 (ALTAGVSMVVSFSTPFALGLF). Over 268-270 (KPR) the chain is Cytoplasmic. Residues 271–291 (TLMLVSQGLFLTAGVTLSLAH) form a helical membrane-spanning segment. The Periplasmic segment spans residues 292–294 (TNT). Residues 295-315 (VTLFGLTLICAGFSVGFGVAM) form a helical membrane-spanning segment. Over 316–327 (SQALGPFSLRAG) the chain is Cytoplasmic. Residues 328-350 (VASSTLGIAQVCGSSLWIWLAAI) traverse the membrane as a helical segment. Topologically, residues 351–354 (LGIS) are periplasmic. The chain crosses the membrane as a helical span at residues 355 to 377 (AMNMLIGILIGCSIVSILLIFSV). Residues 378–395 (TPNRSVAEHEEIPYQSRP) lie on the Cytoplasmic side of the membrane.

It belongs to the major facilitator superfamily. DHA1 family. MdtL (TC 2.A.1.2.22) subfamily.

The protein resides in the cell inner membrane. This Salmonella typhimurium (strain LT2 / SGSC1412 / ATCC 700720) protein is Multidrug resistance protein MdtL (mdtL).